We begin with the raw amino-acid sequence, 208 residues long: Major capsid protein (208 aa).

The span at 1–16 shows a compositional bias: low complexity; the sequence is MSTVVVKGNVNGGVQQ. Residues 1-69 are disordered; that stretch reads MSTVVVKGNV…TGVPRGRGSS (69 aa). Basic residues-rich tracts occupy residues 17 to 30 and 44 to 61; these read PRRR…RRAN and PRRR…RRTG.

Belongs to the luteoviruses capsid protein family.

It localises to the virion. Functionally, major capsid protein that self-assembles to form an icosahedral capsid with a T=3 symmetry, about 23 nm in diameter, and consisting of 180 capsid proteins monomers. Most of the 180 monomers are the major capsid protein, but a small percentage contain the minor capsid protein, which has a long C-terminal extension. This chain is Major capsid protein, found in Solanum tuberosum (Potato).